Here is a 423-residue protein sequence, read N- to C-terminus: Glucuronoxylanase XynC (423 aa).

The first 33 residues, Met1 to Ala33, serve as a signal peptide directing secretion. The Proton donor role is filled by Glu172. Glu261 functions as the Nucleophile in the catalytic mechanism.

Belongs to the glycosyl hydrolase 30 family.

It is found in the secreted. The catalysed reaction is Endohydrolysis of (1-&gt;4)-beta-D-xylosyl links in some glucuronoarabinoxylans.. The protein operates within glycan degradation; xylan degradation. Functionally, catalyzes the depolymerization of methylglucuronoxylan (MeGAXn). It cleaves the beta-1,4-xylosidic bond penultimate to that linking carbon one of the xylose residue substituted with alpha-1,2-linked 4-O-methyl-D-glucuronate (MeGA). In Bacillus subtilis, this protein is Glucuronoxylanase XynC (xynC).